We begin with the raw amino-acid sequence, 350 residues long: Glutamyl-tRNA reductase (350 aa).

Substrate contacts are provided by residues 53–56, Ser-105, 110–112, and Gln-116; these read TCNR and ETQ. Cys-54 (nucleophile) is an active-site residue. An NADP(+)-binding site is contributed by 185–190; it reads GAGETA.

It belongs to the glutamyl-tRNA reductase family. As to quaternary structure, homodimer.

It catalyses the reaction (S)-4-amino-5-oxopentanoate + tRNA(Glu) + NADP(+) = L-glutamyl-tRNA(Glu) + NADPH + H(+). The protein operates within porphyrin-containing compound metabolism; protoporphyrin-IX biosynthesis; 5-aminolevulinate from L-glutamyl-tRNA(Glu): step 1/2. Its function is as follows. Catalyzes the NADPH-dependent reduction of glutamyl-tRNA(Glu) to glutamate 1-semialdehyde (GSA). The chain is Glutamyl-tRNA reductase from Deinococcus radiodurans (strain ATCC 13939 / DSM 20539 / JCM 16871 / CCUG 27074 / LMG 4051 / NBRC 15346 / NCIMB 9279 / VKM B-1422 / R1).